The primary structure comprises 396 residues: Metallophosphoesterase 1 (396 aa).

The helical transmembrane segment at 28–48 threads the bilayer; that stretch reads TVVIISVLLFCEYFIYYLVLF. A divalent metal cation contacts are provided by aspartate 75, aspartate 117, asparagine 155, histidine 249, histidine 303, and histidine 305. The helical transmembrane segment at 356 to 376 threads the bilayer; the sequence is TVLTMYGAAAGFLMILILVHF.

This sequence belongs to the metallophosphoesterase superfamily. MPPE1 family. In terms of assembly, interacts with GPI-anchor proteins (via the GPI portion). Interacts with TMED10. The cofactor is Mn(2+).

It localises to the endoplasmic reticulum-Golgi intermediate compartment membrane. Its function is as follows. Metallophosphoesterase that catalyzes the removal of a side-chain ethanolamine-phosphate (EtNP) from the second mannose of the GPI-anchor protein intermediate. Participates in the glycan remodeling steps of GPI-anchor maturation to allow an efficient transport of GPI-anchor proteins from the endoplasmic reticulum to the Golgi. This chain is Metallophosphoesterase 1, found in Mus musculus (Mouse).